Consider the following 652-residue polypeptide: DNA ligase (652 aa).

NAD(+)-binding positions include 29-33, 78-79, and glutamate 107; these read DSQYD and SL. Lysine 109 serves as the catalytic N6-AMP-lysine intermediate. Positions 130, 164, 278, and 302 each coordinate NAD(+). Residues cysteine 395, cysteine 398, cysteine 413, and cysteine 418 each contribute to the Zn(2+) site. A BRCT domain is found at 577 to 652; that stretch reads STDAQLSGLT…IQDEDWLLNL (76 aa).

This sequence belongs to the NAD-dependent DNA ligase family. LigA subfamily. Mg(2+) serves as cofactor. The cofactor is Mn(2+).

The enzyme catalyses NAD(+) + (deoxyribonucleotide)n-3'-hydroxyl + 5'-phospho-(deoxyribonucleotide)m = (deoxyribonucleotide)n+m + AMP + beta-nicotinamide D-nucleotide.. Its function is as follows. DNA ligase that catalyzes the formation of phosphodiester linkages between 5'-phosphoryl and 3'-hydroxyl groups in double-stranded DNA using NAD as a coenzyme and as the energy source for the reaction. It is essential for DNA replication and repair of damaged DNA. This chain is DNA ligase, found in Streptococcus agalactiae serotype V (strain ATCC BAA-611 / 2603 V/R).